Here is a 608-residue protein sequence, read N- to C-terminus: MSYTASPCPELVEPCAVHAEGMAQEESHRSQAPPTFYHGASQELDLSTKVYKRESGSPYSVLADTKMSKPHLHETEEQPYFREPRAVSDVHTVKEDRENSDDTEEEEEVSYKREQIIVEVNLNNQTLNVSKGEKGVSSQSKETPVLKTSSEEDEEETEEEATDNSSDYGENGRQKKKEKQVERVRVTQRRTRRAASAAAATTSPAPRTTRGRRKSAELPKRKKRATKEAKAPVQKAKCEEKETLTCEKCPRVFNTRWYLEKHMNVTHRRMQICDKCGKKFVLESELSLHQQTDCEKNIQCVSCNKSFKKLWSLHEHIKIVHGYAEKKFACEICEKKFYTMAHVRKHMVAHTKDMPFTCETCGKSFKRSMSLKVHSLQHSGEKPFRCENCDERFQYKYQLRSHMSIHIGHKQFMCQWCGKDFNMKQYFDEHMKTHTGEKPFICEICGKSFTSRPNMKRHRRTHTGEKPYPCDVCGQRFRFSNMLKAHKEKCFRVTSPVNVPPAVQIPLASAPAAPAPAVANTPTSPAPAVSMSPVGAVLPSRPVPHPFSHLHIHTHPHHAHHLPIPPVPHLPPPPALFKSEPLNHRSQSEDTFLRHLAEKNSAAPAQHH.

Phosphoserine is present on Ser-57. The segment at Val-61 to Pro-232 is disordered. The span at His-71–Arg-97 shows a compositional bias: basic and acidic residues. 2 stretches are compositionally biased toward acidic residues: residues Glu-98 to Glu-108 and Glu-151 to Thr-162. At Ser-100 the chain carries Phosphoserine. Thr-103 bears the Phosphothreonine mark. A compositionally biased stretch (low complexity) spans Ala-194–Thr-208. A phosphoserine mark is found at Ser-196 and Ser-203. The C2H2-type 1 zinc finger occupies Leu-244–His-267. A C2H2-type 2; degenerate zinc finger spans residues Gln-271–Asp-293. C2H2-type zinc fingers lie at residues Ile-298–His-321, Phe-328–His-350, Phe-356–His-378, Phe-384–His-406, Phe-412–His-434, and Phe-440–His-462. A C2H2-type 9; degenerate zinc finger spans residues Tyr-468 to Phe-491. The interval Val-497–His-608 is mediates interaction with CBFA2T3.

Belongs to the krueppel C2H2-type zinc-finger protein family. In terms of assembly, interacts with CBFA2T3.

Its subcellular location is the nucleus. Functionally, functions as a transcriptional repressor. This is Zinc finger protein 652 (Znf652) from Mus musculus (Mouse).